We begin with the raw amino-acid sequence, 189 residues long: MAREGEGGGRGGREERDSEFVDRLVHINRVAKVVKGGRRFGFAALVVVGDQKGRVGYGHGKAREVPEAIRKATESAKRALIRVPLREGRTLHHDVNGRHGAGRVVLRAAPAGTGIIAGGPMRAVFETLGMHDVVAKSQGSSNPYNMIRATFDALQREDSPRAVAARRSLKVSVLQGRRLGGDTETAAEG.

One can recognise an S5 DRBM domain in the interval 20–83 (FVDRLVHINR…ESAKRALIRV (64 aa)).

Belongs to the universal ribosomal protein uS5 family. Part of the 30S ribosomal subunit. Contacts proteins S4 and S8.

Its function is as follows. With S4 and S12 plays an important role in translational accuracy. Located at the back of the 30S subunit body where it stabilizes the conformation of the head with respect to the body. The protein is Small ribosomal subunit protein uS5 of Beijerinckia indica subsp. indica (strain ATCC 9039 / DSM 1715 / NCIMB 8712).